A 359-amino-acid chain; its full sequence is MSLSAGLPVRPLLLLLLLLWSVAPQALPPRSHSLRYLFMGASEPDLGLPLFEARGYVDDQLFVSYNHESRRAEPRAPWILEQTSSQLWLHLSQSLKGWDYMFIVDFWTIMGNYNHSKVTKLGVVSESHILQVVLGCEVHEDNSTSGFWRYGYDGQDHLEFCPKTLNWSAAEPGAWATKVEWDEHKIRAKQNRDYLEKDCPEQLKRLLELGRGVLGQQVPTLVKVTRHWASTGTSLRCQALDFFPQNITMRWLKDNQPLDAKDVNPEKVLPNGDETYQGWLTLAVAPGDETRFTCQVEHPGLDQPLTASWEPLQSQAMIIGIISGVTVCAIFLVGILFLILRKRKASGGTMGGYVLTDCE.

The N-terminal stretch at 1–24 is a signal peptide; that stretch reads MSLSAGLPVRPLLLLLLLLWSVAP. The segment at 25-126 is alpha-1; sequence QALPPRSHSL…KVTKLGVVSE (102 aa). Topologically, residues 25-318 are extracellular; it reads QALPPRSHSL…WEPLQSQAMI (294 aa). Residues Asn-114, Asn-142, Asn-166, and Asn-246 are each glycosylated (N-linked (GlcNAc...) asparagine). The alpha-2 stretch occupies residues 127 to 217; that stretch reads SHILQVVLGC…ELGRGVLGQQ (91 aa). Cystine bridges form between Cys-136–Cys-199 and Cys-237–Cys-294. The segment at 218–309 is alpha-3; the sequence is VPTLVKVTRH…GLDQPLTASW (92 aa). The Ig-like C1-type domain occupies 219 to 308; the sequence is PTLVKVTRHW…PGLDQPLTAS (90 aa). The connecting peptide stretch occupies residues 310–318; that stretch reads EPLQSQAMI. A helical membrane pass occupies residues 319–339; the sequence is IGIISGVTVCAIFLVGILFLI. Over 340 to 359 the chain is Cytoplasmic; it reads LRKRKASGGTMGGYVLTDCE.

The protein belongs to the MHC class I family. Binds TFR through the extracellular domain in a pH-dependent manner.

It localises to the cell membrane. In terms of biological role, binds to transferrin receptor (TFR) and reduces its affinity for iron-loaded transferrin. In Mus musculus (Mouse), this protein is Hereditary hemochromatosis protein homolog (Hfe).